Consider the following 564-residue polypeptide: uncharacterized protein (564 aa).

8 helical membrane-spanning segments follow: residues 12 to 32, 97 to 119, 139 to 161, 188 to 208, 213 to 233, 277 to 297, 306 to 326, and 348 to 368; these read TYYLWIALFLLLLYVSPLFIL, MTAYAISQTVTRVVAFFGMYVLL, AFALTPFWPSGMLSTLGYPLALW, FVLGFFFFLAGMACFWLYDAI, WNLMFLGSIAFMTSIYLFVEY, MTVHTVVILPILMVVFAALLF, NVYLFLCVLNYGLSLWYAFWF, and FHFLRPLVIYVSFALALYLIW.

It localises to the cell membrane. This is an uncharacterized protein from Bacillus subtilis (strain 168).